We begin with the raw amino-acid sequence, 379 residues long: Alpha-humulene synthase eupE (379 aa).

Belongs to the terpene synthase family. Alpha-humulene synthase eupE subfamily. Requires Mg(2+) as cofactor.

It catalyses the reaction (2E,6E)-farnesyl diphosphate = alpha-humulene + diphosphate. It functions in the pathway secondary metabolite biosynthesis; terpenoid biosynthesis. Alpha-humulene synthase; part of the gene cluster that mediates the biosynthesis of eupenifeldin, a bistropolone meroterpenoid that acts as an antitumor agent. The first step of eupenifeldin biosynthesis is the biosynthesis of 3-methylorcinaldehyde performed by the non-reducing polyketide synthase eupA. Oxidative dearomatization of 3-methylorcinaldehyde likely catalyzed by the FAD-dependent monooxygenase eupB is followed by oxidative ring expansion by the 2-oxoglutarate-dependent dioxygenase eupC to provide the first tropolone metabolite, tropolone stipitaldehyde. In parallel, generation of sesquiterpene alpha-humulene from farnesylpyrophosphate (FPP) is catalyzed by the terpene cyclase eupE. The cytochrome P450 monooxygenase eupD then hydroxylates humulene to humulenol. The putative Diels-Alderase eupF probably catalyzes the formation of the tropolone-humulene skeleton by linking humulenol and the polyketide moiety. The short-chain dehydrogenase/reductase eupG and the flavin-dependent monooxygenase eupH are also essential for eupenifeldin biosynthesis and are likely the additional decorating enzymes of the tropolone-humulene skeleton to produce final eupenifeldin or derivatives. This Phoma sp protein is Alpha-humulene synthase eupE.